We begin with the raw amino-acid sequence, 510 residues long: DAP3-binding cell death enhancer 1 (510 aa).

The transit peptide at 1 to 23 (MWRLTGILGRALPRLLGPGFRGI) directs the protein to the mitochondrion. Disordered regions lie at residues 19–61 (GFRG…SRDP) and 142–185 (VLPR…SGLL). A propeptide spans 24–101 (TPKPTSSDGS…AVLALHLARQ (78 aa)) (extended MTS). Residues 35–45 (TTSPTLPLTRL) show a composition bias toward low complexity. Basic and acidic residues-rich tracts occupy residues 46-61 (SFDR…SRDP) and 155-167 (GLRE…EDHP). Polar residues predominate over residues 169–181 (APSQCLPSDSSLR). TPR repeat units lie at residues 213–245 (AHPP…QLSV), 246–278 (AITF…RGYS), 279–313 (KAQY…VQGH), 314–351 (SLAQ…DSGL), 352–385 (TEAQ…SNGD), 386–423 (SQSR…GNEP), and 471–499 (ASST…TIPS). An SIFI-degron motif is present at residues 307–326 (LAAVQGHSLAQYRYARCLLQ).

This sequence belongs to the DELE1 family. Interacts with DAP3. As to quaternary structure, interacts (via TPR repeats) with EIF2AK1/HRI; activating the protein kinase activity of EIF2AK1/HRI, thereby promoting the integrated stress response (ISR). In terms of assembly, homooctamer; oligomerization is required to activate EIF2AK1/HRI. Interacts (via TPR repeats) with EIF2AK1/HRI; activating the protein kinase activity of EIF2AK1/HRI, thereby promoting the integrated stress response (ISR). In terms of processing, unstable protein in absence of stress: imported in the mitochondrial matrix following processing by the mitochondrial-processing peptidase (MPP), where it is degraded by LONP1. Stabilized in response to iron deficiency: iron deficiency impairs mitochondrial import, promoting localization at the mitochondrial surface and stabilization. Cleaved by OMA1 in response to mitochondrial stress, generating the DAP3-binding cell death enhancer 1 short form (DELE1(S) or S-DELE1) that accumulates in the cytosol and activates the protein kinase activity of EIF2AK1/HRI. Protein cleavage by OMA1 can take place at different positions, and apparently does not require a specific sequence motif. Post-translationally, ubiquitinated and degraded by the SIFI complex once the mitochondrial stress has been resolved, thereby providing stress response silencing. Within the SIFI complex, UBR4 initiates ubiquitin chain that are further elongated or branched by KCMF1.

It is found in the mitochondrion. The protein localises to the mitochondrion outer membrane. It localises to the mitochondrion inner membrane. The protein resides in the cytoplasm. Its subcellular location is the cytosol. Functionally, protein kinase activator that acts as a key activator of the integrated stress response (ISR) following various stresses, such as iron deficiency, mitochondrial stress or mitochondrial DNA breaks. Detects impaired protein import and processing in mitochondria, activating the ISR. May also required for the induction of death receptor-mediated apoptosis through the regulation of caspase activation. Its function is as follows. Protein kinase activator that activates the ISR in response to iron deficiency: iron deficiency impairs mitochondrial import, promoting DELE1 localization at the mitochondrial surface, where it binds and activates EIF2AK1/HRI to trigger the ISR. In terms of biological role, protein kinase activator generated by protein cleavage in response to mitochondrial stress, which accumulates in the cytosol and specifically binds to and activates the protein kinase activity of EIF2AK1/HRI. It thereby activates the integrated stress response (ISR): EIF2AK1/HRI activation promotes eIF-2-alpha (EIF2S1) phosphorylation, leading to a decrease in global protein synthesis and the induction of selected genes, including the transcription factor ATF4, the master transcriptional regulator of the ISR. Also acts as an activator of PRKN-independent mitophagy: activates the protein kinase activity of EIF2AK1/HRI in response to mitochondrial damage, promoting eIF-2-alpha (EIF2S1) phosphorylation, leading to mitochondrial localization of EIF2S1 followed by induction of mitophagy. The sequence is that of DAP3-binding cell death enhancer 1 from Mus musculus (Mouse).